The primary structure comprises 132 residues: MVMTDPIADLLTRIRNANVVRHGVVELPSSKIKKAMANILLQEGYLKDIEEYNDGVVPMLRLSMKYGKGKERIVTGLKRISKPGLRVYCRKEEIPKVLNGLGIAIISTSKGIVTDKEARKLGLGGEVLCYVW.

Belongs to the universal ribosomal protein uS8 family. In terms of assembly, part of the 30S ribosomal subunit. Contacts proteins S5 and S12.

Functionally, one of the primary rRNA binding proteins, it binds directly to 16S rRNA central domain where it helps coordinate assembly of the platform of the 30S subunit. This chain is Small ribosomal subunit protein uS8, found in Clostridium acetobutylicum (strain ATCC 824 / DSM 792 / JCM 1419 / IAM 19013 / LMG 5710 / NBRC 13948 / NRRL B-527 / VKM B-1787 / 2291 / W).